The following is a 499-amino-acid chain: MNDSKDAPKSYDFDLIIIGGGSGGLAAAKEAAKFDKKVMVLDFVTPTPLGTRWGLGGTCVNVGCIPKKLMHQAALLGQALKDSRNYGWKLEDTVKHDWEKMTESVQNHIGSLNWGYRVALREKKVVYENAYGKFIGPHKIMATNNKGKEKVYSAERFLIATGERPRYLGIPGDKEYCISSDDLFSLPYCPGKTLVVGASYVALECAGFLAGIGLDVTVMVRSILLRGFDQDMANKIGEHMEEHGIKFIRQFVPTKIEQIEAGTPGRLKVTAKSTNSEETIEDEFNTVLLAVGRDSCTRTIGLETVGVKINEKTGKIPVTDEEQTNVPYIYAIGDILEGKLELTPVAIQAGRLLAQRLYGGSTVKCDYDNVPTTVFTPLEYGCCGLSEEKAVEKFGEENIEVYHSFFWPLEWTVPSRDNNKCYAKVICNLKDNERVVGFHVLGPNAGEVTQGFAAALKCGLTKQQLDSTIGIHPVCAEIFTTLSVTKRSGGDILQSGCUG.

Residues 18–23 (IGGGSG), 42–43 (DF), 58–59 (TC), and 63–67 (GCIPK) each bind FAD. The cysteines at positions 59 and 64 are disulfide-linked. At lysine 68 the chain carries N6-succinyllysine. Tyrosine 131 is subject to Phosphotyrosine. FAD is bound by residues 131 to 132 (YG) and threonine 161. Residues arginine 166, 198–204 (ASYVALE), 221–222 (RS), arginine 226, 226–228 (RGF), 291–293 (VGR), and lysine 315 each bind NADP(+). Tyrosine 200 contacts FAD. Residues aspartate 334, 341–343 (ELT), and histidine 472 each bind FAD. Glutamate 341 provides a ligand contact to NADP(+). The active-site Proton acceptor is the histidine 472. The cysteinyl-selenocysteine (Cys-Sec) cross-link spans 497 to 498 (CU). A non-standard amino acid (selenocysteine) is located at residue selenocysteine 498.

The protein belongs to the class-I pyridine nucleotide-disulfide oxidoreductase family. As to quaternary structure, homodimer. It depends on FAD as a cofactor. In terms of processing, ISGylated.

Its subcellular location is the cytoplasm. The enzyme catalyses [thioredoxin]-dithiol + NADP(+) = [thioredoxin]-disulfide + NADPH + H(+). It catalyses the reaction H2O2 + NADPH + H(+) = NADP(+) + 2 H2O. Functionally, reduces disulfideprotein thioredoxin (Trx) to its dithiol-containing form. Homodimeric flavoprotein involved in the regulation of cellular redox reactions, growth and differentiation. Contains a selenocysteine residue at the C-terminal active site that is essential for catalysis. Also has reductase activity on hydrogen peroxide (H2O2). In Rattus norvegicus (Rat), this protein is Thioredoxin reductase 1, cytoplasmic.